A 351-amino-acid polypeptide reads, in one-letter code: Pentatricopeptide repeat-containing protein At3g56030, mitochondrial (351 aa).

A mitochondrion-targeting transit peptide spans 1–41 (MFRLKPLISVDLNQTMSLLRRFVKEANNSRFLLQSISGRSF). 4 PPR repeats span residues 124 to 158 (RKHS…EFGL), 159 to 193 (STCV…AIPV), 194 to 224 (DVTS…MEEE), and 232 to 266 (DTRT…GLSV).

It belongs to the PPR family. P subfamily.

The protein resides in the mitochondrion. The sequence is that of Pentatricopeptide repeat-containing protein At3g56030, mitochondrial from Arabidopsis thaliana (Mouse-ear cress).